The following is a 293-amino-acid chain: Bifunctional protein FolD (293 aa).

Residues 165-167 (GRS), Thr-194, and Val-235 each bind NADP(+).

The protein belongs to the tetrahydrofolate dehydrogenase/cyclohydrolase family. Homodimer.

The catalysed reaction is (6R)-5,10-methylene-5,6,7,8-tetrahydrofolate + NADP(+) = (6R)-5,10-methenyltetrahydrofolate + NADPH. The enzyme catalyses (6R)-5,10-methenyltetrahydrofolate + H2O = (6R)-10-formyltetrahydrofolate + H(+). It participates in one-carbon metabolism; tetrahydrofolate interconversion. In terms of biological role, catalyzes the oxidation of 5,10-methylenetetrahydrofolate to 5,10-methenyltetrahydrofolate and then the hydrolysis of 5,10-methenyltetrahydrofolate to 10-formyltetrahydrofolate. The chain is Bifunctional protein FolD from Syntrophus aciditrophicus (strain SB).